The following is a 199-amino-acid chain: Transmembrane protein 9B (199 aa).

The N-terminal stretch at 1–34 (MASLWCGNLLRLGSGLSMSCLALSVLLLAQLTGA) is a signal peptide. N-linked (GlcNAc...) asparagine glycosylation is present at asparagine 61. A helical membrane pass occupies residues 106–126 (IIIYLSILGLLLLYMVYLTLV). Serine 143 and serine 190 each carry phosphoserine.

Belongs to the TMEM9 family. In terms of processing, N-glycosylated.

It localises to the lysosome membrane. The protein resides in the early endosome membrane. Functionally, enhances production of pro-inflammatory cytokines induced by TNF, IL1B, and TLR ligands. Has a role in TNF activation of both the NF-kappaB and MAPK pathways. The sequence is that of Transmembrane protein 9B (Tmem9b) from Mus musculus (Mouse).